The sequence spans 175 residues: Ferritin light chain (175 aa).

S2 carries the N-acetylserine modification. One can recognise a Ferritin-like diiron domain in the interval 7–156; the sequence is QNYSTEVEAA…DHLTNLRRLA (150 aa). The Fe cation site is built by E54, E57, E58, E61, and E64.

The protein belongs to the ferritin family. Oligomer of 24 subunits. There are two types of subunits: L (light) chain and H (heavy) chain. The major chain can be light or heavy, depending on the species and tissue type. The functional molecule forms a roughly spherical shell with a diameter of 12 nm and contains a central cavity into which the insoluble mineral iron core is deposited. Interacts with NCOA4.

It is found in the cytoplasmic vesicle. Its subcellular location is the autophagosome. The protein resides in the cytoplasm. It localises to the autolysosome. Its function is as follows. Stores iron in a soluble, non-toxic, readily available form. Important for iron homeostasis. Iron is taken up in the ferrous form and deposited as ferric hydroxides after oxidation. Also plays a role in delivery of iron to cells. Mediates iron uptake in capsule cells of the developing kidney. Delivery to lysosomes by the cargo receptor NCOA4 for autophagic degradation and release or iron. The protein is Ferritin light chain (FTL) of Canis lupus familiaris (Dog).